Reading from the N-terminus, the 122-residue chain is Aspartate 1-decarboxylase (122 aa).

Residue Ser25 is the Schiff-base intermediate with substrate; via pyruvic acid of the active site. A Pyruvic acid (Ser) modification is found at Ser25. Residue Thr57 coordinates substrate. Tyr58 serves as the catalytic Proton donor. 73–75 (GAA) is a substrate binding site.

The protein belongs to the PanD family. Heterooctamer of four alpha and four beta subunits. It depends on pyruvate as a cofactor. Post-translationally, is synthesized initially as an inactive proenzyme, which is activated by self-cleavage at a specific serine bond to produce a beta-subunit with a hydroxyl group at its C-terminus and an alpha-subunit with a pyruvoyl group at its N-terminus.

The protein localises to the cytoplasm. It catalyses the reaction L-aspartate + H(+) = beta-alanine + CO2. Its pathway is cofactor biosynthesis; (R)-pantothenate biosynthesis; beta-alanine from L-aspartate: step 1/1. In terms of biological role, catalyzes the pyruvoyl-dependent decarboxylation of aspartate to produce beta-alanine. The sequence is that of Aspartate 1-decarboxylase from Bordetella pertussis (strain Tohama I / ATCC BAA-589 / NCTC 13251).